Here is a 111-residue protein sequence, read N- to C-terminus: MVKQEEKSIDTTVNLHKQCHKISFKKKAPRAIREIVAIAKKTMGTDDVRIDTELNKFIWSNGIRNIPRRVRVRLCKRKNEEEGAQSQFYTLVQHLQVDSYHGLLTEKTKAE.

It belongs to the eukaryotic ribosomal protein eL31 family.

The chain is Large ribosomal subunit protein eL31 (RPL31) from Tetrahymena thermophila (strain SB210).